The chain runs to 71 residues: Phenoloxidase 3 (71 aa).

Cu cation contacts are provided by His-3 and His-29.

Belongs to the tyrosinase family. Cu(2+) is required as a cofactor. Upon activation, a trypsin type protease cleaves prophenol oxidase to yield the active enzyme. In terms of tissue distribution, hemocytes and plasma.

The protein localises to the secreted. It catalyses the reaction 2 L-dopa + O2 = 2 L-dopaquinone + 2 H2O. The enzyme catalyses L-tyrosine + O2 = L-dopaquinone + H2O. Its function is as follows. This is a copper-containing oxidase that functions in the formation of pigments such as melanins and other polyphenolic compounds. Catalyzes the rate-limiting conversions of tyrosine to DOPA, DOPA to DOPA-quinone and possibly 5,6 dihydroxyindole to indole-5'6 quinone. The polypeptide is Phenoloxidase 3 (Sarcophaga argyrostoma (Flesh fly)).